Reading from the N-terminus, the 538-residue chain is Phosphoenolpyruvate carboxykinase (ATP) (538 aa).

Substrate-binding residues include Arg-64, Tyr-205, and Lys-211. ATP is bound by residues Lys-211, His-230, and 246–254 (GLSGTGKTT). The Mn(2+) site is built by Lys-211 and His-230. Asp-267 provides a ligand contact to Mn(2+). Residues Glu-295, Arg-331, 447-448 (RI), and Thr-453 each bind ATP. Position 331 (Arg-331) interacts with substrate.

The protein belongs to the phosphoenolpyruvate carboxykinase (ATP) family. Monomer. Requires Mn(2+) as cofactor.

It localises to the cytoplasm. The enzyme catalyses oxaloacetate + ATP = phosphoenolpyruvate + ADP + CO2. Its pathway is carbohydrate biosynthesis; gluconeogenesis. Its function is as follows. Involved in the gluconeogenesis. Catalyzes the conversion of oxaloacetate (OAA) to phosphoenolpyruvate (PEP) through direct phosphoryl transfer between the nucleoside triphosphate and OAA. The sequence is that of Phosphoenolpyruvate carboxykinase (ATP) from Histophilus somni (strain 129Pt) (Haemophilus somnus).